Reading from the N-terminus, the 107-residue chain is Integration host factor (107 aa).

Residues 1-20 are disordered; sequence MALPPLTPEQRAAALEKAAA. Positions 9–18 are enriched in low complexity; it reads EQRAAALEKA. Residue Lys54 participates in DNA binding. Residues 64–71 carry the H2TH motif, binds DNA motif; it reads LPGVGKVR. DNA is bound by residues Ser82, Arg85, Arg88, Ser92, Asn93, and Gln94. A lid, binds DNA region spans residues 82–94; it reads SESRRVRGLGSNQ.

Belongs to the actinobacterial IHF (aIHF) family. As to quaternary structure, monomer.

The protein resides in the cytoplasm. It localises to the spore. Its subcellular location is the nucleoid. Its function is as follows. A nucleoid-associated protein (NAP) that probably plays a role in chromosome compactation. Contributes to development and secondary metabolism, but is dispensable for growth and viability. Binds to the promoter region of a number of genes (including itself); multiple molecules of the protein bind to the DNA simultaneously, deletion alters the expression of about 30 genes (both up- and down-regulation occurs). Plays a role in controlling viability. Binds dsDNA without any obvious sequence specificity, in a concentration and length-dependent manner. Promotes supercoiling in a topoisomerase-dependent manner (counteracts TopA plasmid relaxation). Binds DNA as a monomer, contacting 8 base pairs via the phosphate backbone; each monomer can bind 2 DNA duplexes, allowing a bridging function. Alters DNA topology, constraining negative supercoils, possibly by DNA twist. Longer dsDNA binds more than one sIHF subunit. The chain is Integration host factor from Streptomyces coelicolor (strain ATCC BAA-471 / A3(2) / M145).